We begin with the raw amino-acid sequence, 625 residues long: BTB/POZ domain-containing protein At5g48130 (625 aa).

The BTB domain occupies 41–105 (ASVHVRVCNK…IYGCPTLIHP (65 aa)). Residues 217–469 (DTWIKDLTDL…VQALFIQQLN (253 aa)) enclose the NPH3 domain. Positions 494–507 (VPSSRPLTSQQSPC) are enriched in polar residues. The disordered stretch occupies residues 494 to 513 (VPSSRPLTSQQSPCTDDETG).

The protein belongs to the NPH3 family.

The protein operates within protein modification; protein ubiquitination. May act as a substrate-specific adapter of an E3 ubiquitin-protein ligase complex (CUL3-RBX1-BTB) which mediates the ubiquitination and subsequent proteasomal degradation of target proteins. This Arabidopsis thaliana (Mouse-ear cress) protein is BTB/POZ domain-containing protein At5g48130.